The following is a 338-amino-acid chain: Aspartate carbamoyltransferase catalytic subunit (338 aa).

Carbamoyl phosphate is bound by residues arginine 57 and threonine 58. Lysine 86 lines the L-aspartate pocket. Carbamoyl phosphate-binding residues include arginine 107, histidine 135, and glutamine 138. L-aspartate contacts are provided by arginine 172 and arginine 234. Carbamoyl phosphate contacts are provided by leucine 274 and proline 275.

The protein belongs to the aspartate/ornithine carbamoyltransferase superfamily. ATCase family. As to quaternary structure, heterododecamer (2C3:3R2) of six catalytic PyrB chains organized as two trimers (C3), and six regulatory PyrI chains organized as three dimers (R2).

The enzyme catalyses carbamoyl phosphate + L-aspartate = N-carbamoyl-L-aspartate + phosphate + H(+). It functions in the pathway pyrimidine metabolism; UMP biosynthesis via de novo pathway; (S)-dihydroorotate from bicarbonate: step 2/3. In terms of biological role, catalyzes the condensation of carbamoyl phosphate and aspartate to form carbamoyl aspartate and inorganic phosphate, the committed step in the de novo pyrimidine nucleotide biosynthesis pathway. The protein is Aspartate carbamoyltransferase catalytic subunit of Cellvibrio japonicus (strain Ueda107) (Pseudomonas fluorescens subsp. cellulosa).